The following is a 321-amino-acid chain: Glycolipid transfer protein domain-containing protein 2 (321 aa).

This sequence belongs to the GLTP family.

The sequence is that of Glycolipid transfer protein domain-containing protein 2 (Gltpd2) from Mus musculus (Mouse).